Consider the following 1115-residue polypeptide: Lateral signaling target protein 2 homolog (1115 aa).

Disordered regions lie at residues 308–488, 545–586, 600–742, and 879–1027; these read PLGS…DSDS, SEDD…PSTS, RLPS…SLSD, and VQSS…PDGK. The span at 322–361 shows a compositional bias: low complexity; sequence NNSSSTTNTSNNNNNNTNNNNSSSGSDCTNNDKTGTTTNT. The span at 363 to 373 shows a compositional bias: basic and acidic residues; that stretch reads KPVERLVDHRN. Low complexity-rich tracts occupy residues 374–417 and 425–444; these read NNTT…TPTA and PSHS…NSPA. Residues 449-488 are compositionally biased toward acidic residues; the sequence is YDDDDEDDDDDDVHADVEEDEDESGILDSDEHDLNDDSDS. Low complexity-rich tracts occupy residues 558 to 577 and 600 to 614; these read QQQQ…QQQQ and RLPS…SSNN. Residues serine 603 and serine 604 each carry the phosphoserine modification. Over residues 615-628 the composition is skewed to polar residues; it reads QQMTIKSPSEQTTT. Over residues 632–655 the composition is skewed to basic residues; that stretch reads SNRHRHHSHHHHHHHHSHHHHHHQ. The span at 658–676 shows a compositional bias: low complexity; that stretch reads AAVAVAAAQDEQHNNNQPH. The segment covering 677 to 706 has biased composition (basic residues); that stretch reads SHSHSSSHHHHHNHQSHSHPHRANRSTRKR. Composition is skewed to low complexity over residues 714–726, 733–742, and 881–901; these read TITT…GGEQ, DSSTASSLSD, and SSNS…AARS. Phosphoserine is present on serine 908. Composition is skewed to low complexity over residues 921 to 975 and 988 to 1020; these read QQQQ…SPVS and TTTT…MSPP. An FYVE-type zinc finger spans residues 1025–1085; the sequence is DGKAPRCMSC…VCRECFMREV (61 aa). 8 residues coordinate Zn(2+): cysteine 1031, cysteine 1034, cysteine 1047, cysteine 1050, cysteine 1055, cysteine 1058, cysteine 1077, and cysteine 1080. The disordered stretch occupies residues 1088–1115; sequence SHSHGQSQSQIHSPTQQAGGRPQAASAS. Residues 1090–1100 are compositionally biased toward low complexity; sequence SHGQSQSQIHS.

Belongs to the lst-2 family.

Functionally, negative regulator of epidermal growth factor receptor (EGFR) signaling. The protein is Lateral signaling target protein 2 homolog of Drosophila grimshawi (Hawaiian fruit fly).